A 253-amino-acid polypeptide reads, in one-letter code: Homeotic protein ultrabithorax (253 aa).

The segment covering 125 to 141 has biased composition (low complexity); sequence GNTSNGSNAPNAANGQN. The disordered stretch occupies residues 125–193; the sequence is GNTSNGSNAP…GNGTAGGVPQ (69 aa). A compositionally biased stretch (gly residues) spans 176-189; that stretch reads RGGGSAGGGNGTAG. Positions 237–242 match the Antp-type hexapeptide motif; sequence FYPWMA.

This sequence belongs to the Antp homeobox family.

The protein localises to the nucleus. Its function is as follows. Sequence-specific transcription factor which is part of a developmental regulatory system that provides cells with specific positional identities on the anterior-posterior axis. Binds the consensus region 5'-TTAAT[GT][GA]-3'. This homeotic protein controls development of the cells in the posterior thoracic and first abdominal segments. It activates the synthesis of the decapentaplegic (DPP) growth factor. The sequence is that of Homeotic protein ultrabithorax (Ubx) from Drosophila funebris (Fruit fly).